The primary structure comprises 125 residues: uncharacterized protein (125 aa).

A helical transmembrane segment spans residues 21–43; sequence KFSLIALVSFTALAIIVLYHNIS.

It localises to the membrane. This is an uncharacterized protein from Archaeoglobus fulgidus (strain ATCC 49558 / DSM 4304 / JCM 9628 / NBRC 100126 / VC-16).